The sequence spans 448 residues: Phosphoglucosamine mutase (448 aa).

Catalysis depends on serine 100, which acts as the Phosphoserine intermediate. The Mg(2+) site is built by serine 100, aspartate 240, aspartate 242, and aspartate 244. Serine 100 is modified (phosphoserine).

This sequence belongs to the phosphohexose mutase family. Requires Mg(2+) as cofactor. Post-translationally, activated by phosphorylation.

It carries out the reaction alpha-D-glucosamine 1-phosphate = D-glucosamine 6-phosphate. Catalyzes the conversion of glucosamine-6-phosphate to glucosamine-1-phosphate. The protein is Phosphoglucosamine mutase of Bacillus cereus (strain B4264).